Consider the following 95-residue polypeptide: Large ribosomal subunit protein bL21 (95 aa).

Belongs to the bacterial ribosomal protein bL21 family. Part of the 50S ribosomal subunit. Contacts protein L20.

Its function is as follows. This protein binds to 23S rRNA in the presence of protein L20. The protein is Large ribosomal subunit protein bL21 of Chlorobaculum tepidum (strain ATCC 49652 / DSM 12025 / NBRC 103806 / TLS) (Chlorobium tepidum).